We begin with the raw amino-acid sequence, 431 residues long: Helix-loop-helix protein 11 (431 aa).

The tract at residues 88-109 (LANRSLSQPAPLSPTSLDPDRR) is disordered. Positions 91 to 103 (RSLSQPAPLSPTS) are enriched in polar residues. Residues 112 to 163 (MRRQIANCNERRRMQSINAGFLALRALLPRKEGEKLSKAAILQQTADMVHQL) enclose the bHLH domain. Composition is skewed to polar residues over residues 226–241 (TTTSSQASSPVTPRSN) and 248–257 (LPSSYASSAL). Residues 226-311 (TTTSSQASSP…PPPTLPSLET (86 aa)) form a disordered region. Residues 274–291 (TTSTPLSLLTLNGSPTSS) are compositionally biased toward low complexity.

Expressed in the pharynx, nerve cords, the H-shaped excretory cell, vulva muscles, and the anal depressor (at protein level). Expressed in the intestine (at protein level). In males, it is also expressed in the spicules and hyp7 cells of the hypodermis (at protein level).

It is found in the nucleus. In terms of biological role, transcriptional regulator. Component of a feedback loop involving atfs-1, atgl-1 and hlh-11. Binds to the promoter of the atgl-1 lipase to negatively regulate the expression of atgl-1, and thereby promoting fat oxidation in response to mitochondrial stress and mitochondrial respiration in the intestine. In addition, functions with atfs-1 to maintain lifespan. May have a role in fertility and in positively regulating body size. This Caenorhabditis elegans protein is Helix-loop-helix protein 11.